The chain runs to 51 residues: Large ribosomal subunit protein eL39 (51 aa).

The protein belongs to the eukaryotic ribosomal protein eL39 family.

In terms of biological role, binds specifically to a region in 26S rRNA near the subunit interface. This is Large ribosomal subunit protein eL39 (rpl39e) from Sulfolobus acidocaldarius (strain ATCC 33909 / DSM 639 / JCM 8929 / NBRC 15157 / NCIMB 11770).